A 310-amino-acid chain; its full sequence is 4-hydroxyproline 2-epimerase (310 aa).

The Proton acceptor role is filled by Cys-85. Residues 86 to 87 (GH), His-205, and Asp-231 each bind substrate. Cys-235 (proton donor) is an active-site residue. 236-237 (GT) provides a ligand contact to substrate.

The protein belongs to the proline racemase family.

The enzyme catalyses trans-4-hydroxy-L-proline = cis-4-hydroxy-D-proline. Catalyzes the epimerization of trans-4-hydroxy-L-proline (t4LHyp) to cis-4-hydroxy-D-proline (c4DHyp). May be involved in a degradation pathway of t4LHyp, which would allow L.aggregata to grow on t4LHyp as a sole carbon source. Displays no proline racemase activity. The protein is 4-hydroxyproline 2-epimerase of Roseibium aggregatum (strain ATCC 25650 / DSM 13394 / JCM 20685 / NBRC 16684 / NCIMB 2208 / IAM 12614 / B1) (Stappia aggregata).